The primary structure comprises 365 residues: DNA replication and repair protein RecF (365 aa).

30–37 (GLNAQGKT) contributes to the ATP binding site.

This sequence belongs to the RecF family.

The protein resides in the cytoplasm. In terms of biological role, the RecF protein is involved in DNA metabolism; it is required for DNA replication and normal SOS inducibility. RecF binds preferentially to single-stranded, linear DNA. It also seems to bind ATP. This Chlamydia trachomatis serovar A (strain ATCC VR-571B / DSM 19440 / HAR-13) protein is DNA replication and repair protein RecF.